An 885-amino-acid polypeptide reads, in one-letter code: Protein kintoun (885 aa).

Disordered regions lie at residues 208–235, 371–390, 607–636, 644–663, 781–806, and 819–871; these read LSKN…ADAG, LSRE…PVED, ELQQ…ESAC, EHHE…QRSY, RRLS…QPAH, and NNNH…MMFE. Residues 213–232 show a composition bias toward basic and acidic residues; that stretch reads TAEEKEPHPLEHMYPKKPEA. Serine 376 bears the Phosphoserine mark. The segment covering 612 to 629 has biased composition (basic residues); that stretch reads HHQKKLNKKQRKRNKKQR. At serine 784 the chain carries Phosphoserine. Over residues 824-837 the composition is skewed to basic and acidic residues; it reads HVKDNKKQSLHDSG. Low complexity predominate over residues 842–855; the sequence is NGSINNKNNHSNEN.

It belongs to the PIH1 family. Kintoun subfamily. In terms of assembly, interacts with Pp1alpha-96A, Pp1-87B, Pp1-13C and flw.

The protein resides in the cytoplasm. Its function is as follows. Required for cytoplasmic pre-assembly of axonemal dyneins, thereby playing a central role in motility in cilia and flagella. Involved in pre-assembly of dynein arm complexes in the cytoplasm before intraflagellar transport loads them for the ciliary compartment. This is Protein kintoun from Drosophila mojavensis (Fruit fly).